The sequence spans 201 residues: Large ribosomal subunit protein bL25 (201 aa).

Belongs to the bacterial ribosomal protein bL25 family. CTC subfamily. Part of the 50S ribosomal subunit; part of the 5S rRNA/L5/L18/L25 subcomplex. Contacts the 5S rRNA. Binds to the 5S rRNA independently of L5 and L18.

In terms of biological role, this is one of the proteins that binds to the 5S RNA in the ribosome where it forms part of the central protuberance. The protein is Large ribosomal subunit protein bL25 of Burkholderia lata (strain ATCC 17760 / DSM 23089 / LMG 22485 / NCIMB 9086 / R18194 / 383).